Reading from the N-terminus, the 104-residue chain is Large ribosomal subunit protein uL24 (104 aa).

Belongs to the universal ribosomal protein uL24 family. Part of the 50S ribosomal subunit.

Functionally, one of two assembly initiator proteins, it binds directly to the 5'-end of the 23S rRNA, where it nucleates assembly of the 50S subunit. Its function is as follows. One of the proteins that surrounds the polypeptide exit tunnel on the outside of the subunit. The chain is Large ribosomal subunit protein uL24 from Yersinia pseudotuberculosis serotype O:1b (strain IP 31758).